The chain runs to 447 residues: Na(+)-translocating NADH-quinone reductase subunit A (447 aa).

The protein belongs to the NqrA family. As to quaternary structure, composed of six subunits; NqrA, NqrB, NqrC, NqrD, NqrE and NqrF.

The enzyme catalyses a ubiquinone + n Na(+)(in) + NADH + H(+) = a ubiquinol + n Na(+)(out) + NAD(+). Functionally, NQR complex catalyzes the reduction of ubiquinone-1 to ubiquinol by two successive reactions, coupled with the transport of Na(+) ions from the cytoplasm to the periplasm. NqrA to NqrE are probably involved in the second step, the conversion of ubisemiquinone to ubiquinol. The sequence is that of Na(+)-translocating NADH-quinone reductase subunit A from Yersinia pestis.